The sequence spans 446 residues: Tubulin beta-2 chain (446 aa).

GTP is bound by residues Q11, E69, S138, G142, T143, G144, N204, and N226. A Mg(2+)-binding site is contributed by E69. Residues 424–446 (QYQEATADEEGEFDEDEEGGGDE) are disordered. Residues 429–446 (TADEEGEFDEDEEGGGDE) show a composition bias toward acidic residues.

The protein belongs to the tubulin family. Dimer of alpha and beta chains. A typical microtubule is a hollow water-filled tube with an outer diameter of 25 nm and an inner diameter of 15 nM. Alpha-beta heterodimers associate head-to-tail to form protofilaments running lengthwise along the microtubule wall with the beta-tubulin subunit facing the microtubule plus end conferring a structural polarity. Microtubules usually have 13 protofilaments but different protofilament numbers can be found in some organisms and specialized cells. Mg(2+) is required as a cofactor. In terms of tissue distribution, testis specific.

The protein resides in the cytoplasm. Its subcellular location is the cytoskeleton. Functionally, tubulin is the major constituent of microtubules, a cylinder consisting of laterally associated linear protofilaments composed of alpha- and beta-tubulin heterodimers. Microtubules grow by the addition of GTP-tubulin dimers to the microtubule end, where a stabilizing cap forms. Below the cap, tubulin dimers are in GDP-bound state, owing to GTPase activity of alpha-tubulin. The protein is Tubulin beta-2 chain (betaTub85D) of Drosophila melanogaster (Fruit fly).